A 452-amino-acid polypeptide reads, in one-letter code: BUB3-interacting and GLEBS motif-containing protein ZNF207 (452 aa).

The segment at 1–92 (MGRKKKKQLK…EGIPEKDMEE (92 aa)) is microtubule-binding region. 2 consecutive C2H2-type zinc fingers follow at residues 11–34 (PWCW…KAKH) and 35–58 (FKCH…MQVH). 2 disordered regions span residues 99-131 (QKTQ…SFQQ) and 298-330 (STMS…TSAT). The segment covering 113-123 (DDSDYDDDDDT) has biased composition (acidic residues). Positions 329–361 (ATSKLVHPDEDISLEEKRAQLPKYQRNLPRPGQ) are GLEBS.

As to quaternary structure, interacts (via GLEBS region) with bub3.

The protein localises to the nucleus. It localises to the chromosome. It is found in the centromere. Its subcellular location is the kinetochore. The protein resides in the cytoplasm. The protein localises to the cytoskeleton. It localises to the spindle. Functionally, kinetochore- and microtubule-binding protein that plays a key role in spindle assembly. Znf207/BuGZ is mainly composed of disordered low-complexity regions and undergoes phase transition or coacervation to form temperature-dependent liquid droplets. Coacervation promotes microtubule bundling and concentrates tubulin, promoting microtubule polymerization and assembly of spindle and spindle matrix by concentrating its building blocks. This is BUB3-interacting and GLEBS motif-containing protein ZNF207 from Xenopus laevis (African clawed frog).